Reading from the N-terminus, the 274-residue chain is Putative phosphatase BUsg_029 (274 aa).

Catalysis depends on Asp8, which acts as the Nucleophile. Asp8 contributes to the Mg(2+) binding site. A phosphate-binding site is contributed by Leu9. Residue Asp10 participates in Mg(2+) binding. Phosphate is bound by residues 42–43 (SG) and Lys191. Asp214 lines the Mg(2+) pocket. Residue Asn217 coordinates phosphate.

Belongs to the HAD-like hydrolase superfamily. Cof family. Mg(2+) is required as a cofactor.

This is Putative phosphatase BUsg_029 from Buchnera aphidicola subsp. Schizaphis graminum (strain Sg).